The chain runs to 430 residues: Histidinol dehydrogenase (430 aa).

Residues Tyr-130, Gln-191, and Asn-214 each coordinate NAD(+). Residues Ser-237, Gln-259, and His-262 each coordinate substrate. The Zn(2+) site is built by Gln-259 and His-262. Active-site proton acceptor residues include Glu-327 and His-328. Substrate is bound by residues His-328, Asp-361, Glu-415, and His-420. Position 361 (Asp-361) interacts with Zn(2+). His-420 lines the Zn(2+) pocket.

The protein belongs to the histidinol dehydrogenase family. Zn(2+) is required as a cofactor.

It carries out the reaction L-histidinol + 2 NAD(+) + H2O = L-histidine + 2 NADH + 3 H(+). It participates in amino-acid biosynthesis; L-histidine biosynthesis; L-histidine from 5-phospho-alpha-D-ribose 1-diphosphate: step 9/9. Its function is as follows. Catalyzes the sequential NAD-dependent oxidations of L-histidinol to L-histidinaldehyde and then to L-histidine. In Brucella abortus (strain 2308), this protein is Histidinol dehydrogenase.